We begin with the raw amino-acid sequence, 515 residues long: MHTTESKNEHLEDENFQTSTTPQSLIDPNNTAQEETKTVLSDTEEIKPQTKKETYISCPLRGVLNVIITNGVILFVIWCMTWSILGSEALPGGNLFGLFIIFYSAIIGGKILQLIRIPLVPPLPPLLGMLLAGFTIRNVPFINEHVHVPNTWSSILRSIALTIILIRAGLGLDPQALRHLKVVCFRLAVGPCLMEASAAAVFSHFIMKFPWQWAFLLGFVLGAVSPAVVVPYMMVLQENGYGVEEGIPTLLMAASSMDDILAITGFNTCLSIVFSSGGILNNAIASIRNVCISLLAGIVLGFFVRYFPSEDQKKLTLKRGFLVLTMCVSAVLGSQRIGLHGSGGLCTLVLSFIAGTKWSQEKMKVQKIITTVWDIFQPLLFGLVGAEVSVSSLESNIVGISVATLSLALCVRILTTYLLMCFAGFSFKEKIFIALAWMPKATVQAVLGPLALETARVSAPHLEPYAKDVMTVAFLAILITAPNGALLMGILGPKMLTRHYDPSKIKLQLSTLEHH.

Residues 1 to 10 (MHTTESKNEH) show a composition bias toward basic and acidic residues. The segment at 1-32 (MHTTESKNEHLEDENFQTSTTPQSLIDPNNTA) is disordered. The span at 16–32 (FQTSTTPQSLIDPNNTA) shows a compositional bias: polar residues. 13 helical membrane passes run 66–86 (VIIT…SILG), 95–115 (LFGL…LQLI), 116–136 (RIPL…GFTI), 152–172 (WSSI…GLGL), 187–207 (LAVG…HFIM), 215–235 (FLLG…YMMV), 260–280 (ILAI…GGIL), 284–304 (IASI…GFFV), 337–357 (IGLH…AGTK), 368–388 (IITT…GAEV), 407–427 (LALC…GFSF), 431–451 (IFIA…GPLA), and 472–492 (VAFL…GILG).

Belongs to the monovalent cation:proton antiporter 1 (CPA1) transporter (TC 2.A.36) family. As to expression, expressed only in the testis.

The protein resides in the cell projection. Its subcellular location is the cilium. It is found in the flagellum membrane. Sperm-specific Na(+)/H(+) exchanger involved in intracellular pH regulation of spermatozoa. Involved in sperm motility and fertility. The chain is Sodium/hydrogen exchanger 9B1 from Homo sapiens (Human).